The following is a 341-amino-acid chain: L-threonine 3-dehydrogenase (341 aa).

Cysteine 38 is a Zn(2+) binding site. Residues threonine 40 and histidine 43 each act as charge relay system in the active site. Zn(2+) contacts are provided by histidine 63, glutamate 64, cysteine 93, cysteine 96, cysteine 99, and cysteine 107. NAD(+) contacts are provided by residues isoleucine 175, aspartate 195, arginine 200, 262-264 (LGI), and 286-287 (IY).

The protein belongs to the zinc-containing alcohol dehydrogenase family. In terms of assembly, homotetramer. Requires Zn(2+) as cofactor.

The protein resides in the cytoplasm. It carries out the reaction L-threonine + NAD(+) = (2S)-2-amino-3-oxobutanoate + NADH + H(+). The protein operates within amino-acid degradation; L-threonine degradation via oxydo-reductase pathway; glycine from L-threonine: step 1/2. In terms of biological role, catalyzes the NAD(+)-dependent oxidation of L-threonine to 2-amino-3-ketobutyrate. The protein is L-threonine 3-dehydrogenase of Shewanella halifaxensis (strain HAW-EB4).